A 669-amino-acid chain; its full sequence is DNA mismatch repair protein MutL (669 aa).

Residues 357–379 (EQRQNTENNQEKTFSSEESNSKS) form a disordered region. The span at 361–379 (NTENNQEKTFSSEESNSKS) shows a compositional bias: polar residues.

This sequence belongs to the DNA mismatch repair MutL/HexB family.

Functionally, this protein is involved in the repair of mismatches in DNA. It is required for dam-dependent methyl-directed DNA mismatch repair. May act as a 'molecular matchmaker', a protein that promotes the formation of a stable complex between two or more DNA-binding proteins in an ATP-dependent manner without itself being part of a final effector complex. The polypeptide is DNA mismatch repair protein MutL (Staphylococcus aureus (strain Mu3 / ATCC 700698)).